The sequence spans 472 residues: uncharacterized protein (472 aa).

Low complexity-rich tracts occupy residues 1–21 (MAFS…SRPG) and 63–74 (ASSLPAPASSSP). The segment at 1-74 (MAFSSSSLRR…SLPAPASSSP (74 aa)) is disordered.

This is an uncharacterized protein from Equus caballus (Horse).